Consider the following 84-residue polypeptide: U8-theraphotoxin-Hhn1c 1 (84 aa).

Positions 1-21 (MKVVLIVCLVWVMAMMELVSC) are cleaved as a signal peptide. Cystine bridges form between cysteine 23–cysteine 35, cysteine 29–cysteine 44, cysteine 34–cysteine 67, cysteine 54–cysteine 75, and cysteine 69–cysteine 81.

This sequence belongs to the AVIT (prokineticin) family. In terms of tissue distribution, expressed by the venom gland.

It localises to the secreted. The protein is U8-theraphotoxin-Hhn1c 1 of Cyriopagopus hainanus (Chinese bird spider).